The primary structure comprises 133 residues: Small ribosomal subunit protein bS6 (133 aa).

It belongs to the bacterial ribosomal protein bS6 family.

In terms of biological role, binds together with bS18 to 16S ribosomal RNA. The sequence is that of Small ribosomal subunit protein bS6 from Chlorobium phaeovibrioides (strain DSM 265 / 1930) (Prosthecochloris vibrioformis (strain DSM 265)).